Here is a 160-residue protein sequence, read N- to C-terminus: Major pollen allergen Bet v 1-C (160 aa).

Residues Lys-55, Tyr-82, Tyr-84, and Asn-101 each contribute to the brassinolide site.

It belongs to the BetVI family.

It localises to the cytoplasm. Functionally, may be a general steroid carrier protein. The protein is Major pollen allergen Bet v 1-C (BETV1C) of Betula pendula (European white birch).